Reading from the N-terminus, the 507-residue chain is Zinc finger protein Aiolos (507 aa).

The segment at 1–85 (MEDIQPTVEL…PMGDAEESEM (85 aa)) is disordered. Position 20 is a phosphothreonine (threonine 20). Residues serine 22 and serine 42 each carry the phosphoserine modification. 2 stretches are compositionally biased toward basic and acidic residues: residues 33–46 (KPHE…REAP) and 56–72 (DSMK…ENIM). Residues lysine 61, lysine 73, and lysine 100 each participate in a glycyl lysine isopeptide (Lys-Gly) (interchain with G-Cter in SUMO2) cross-link. 3 C2H2-type zinc fingers span residues 117-139 (MNCD…KRSH), 145-167 (FQCN…IKLH), and 173-195 (FKCH…LRTH). A C2H2-type 4; atypical zinc finger spans residues 201–223 (YKCEFCGRSYKQRSSLEEHKERC). A Glycyl lysine isopeptide (Lys-Gly) (interchain with G-Cter in SUMO2) cross-link involves residue lysine 244. Threonine 325 is subject to Phosphothreonine. Positions 370–396 (LPSERGLSPNNSAQDSTDTDSNHEDRQ) are disordered. Serine 377 bears the Phosphoserine mark. A C2H2-type 5 zinc finger spans residues 450–472 (FRCDHCHVLFLDYVMFTIHMGCH). The tract at residues 450–502 (FRCDHCHVLFLDYVMFTIHMGCHGFRDPFECNMCGYRSHDRYEFSSHIARGEH) is mediates homodimerization and heterodimerization. Residues 478-502 (FECNMCGYRSHDRYEFSSHIARGEH) form a C2H2-type 6; atypical zinc finger.

The protein belongs to the Ikaros C2H2-type zinc-finger protein family. As to quaternary structure, homodimer. Heterodimer with other IKAROS family members. Interacts with IKZF4 and IKZF5. Interacts with HRAS. Interacts with FOXP3; this interaction may be required for silencing target genes and regulating the suppressive activity of FOXP3-positive regulatory T-cells (Treg). Interacts with BCL21L isoform Bcl-X(L); this interaction blocks the anti-apoptotic role of BCL21L. Associates with histone deacetylase complexes containing HDAC1, MTA2 and SIN3A. Interacts with IKZF1. Expression is restricted to lymphoid tissues. Expressed at highest levels in spleen and at lower levels in the thymus and bone marrow. First detected in more committed lymphoid progenitors and strongly up-regulated as these differentiate into pre-T and pre-B cell precursors.

It localises to the nucleus. It is found in the cytoplasm. Its function is as follows. Transcription factor that plays an important role in the regulation of lymphocyte differentiation. Binds to GGGAA. Plays an essential role in regulation of B-cell differentiation, proliferation and maturation to an effector state. Involved in regulating BCL2 expression and controlling apoptosis in T-cells in an IL2-dependent manner. The sequence is that of Zinc finger protein Aiolos (Ikzf3) from Mus musculus (Mouse).